Reading from the N-terminus, the 144-residue chain is 3-dehydroquinate dehydratase (144 aa).

Tyr-22 (proton acceptor) is an active-site residue. Substrate is bound by residues Asn-73, His-79, and Asp-86. Residue His-99 is the Proton donor of the active site. Substrate is bound by residues 100–101 and Arg-110; that span reads LS.

Belongs to the type-II 3-dehydroquinase family. In terms of assembly, homododecamer.

It carries out the reaction 3-dehydroquinate = 3-dehydroshikimate + H2O. It participates in metabolic intermediate biosynthesis; chorismate biosynthesis; chorismate from D-erythrose 4-phosphate and phosphoenolpyruvate: step 3/7. In terms of biological role, catalyzes a trans-dehydration via an enolate intermediate. In Trichlorobacter lovleyi (strain ATCC BAA-1151 / DSM 17278 / SZ) (Geobacter lovleyi), this protein is 3-dehydroquinate dehydratase.